The primary structure comprises 293 residues: L-ornithine N(alpha)-acyltransferase (293 aa).

This sequence belongs to the acetyltransferase family. OlsB subfamily.

The catalysed reaction is a (3R)-hydroxyacyl-[ACP] + L-ornithine = a lyso-ornithine lipid + holo-[ACP] + H(+). The protein operates within lipid metabolism. Catalyzes the first step in the biosynthesis of ornithine lipids, which are phosphorus-free membrane lipids. Catalyzes the 3-hydroxyacyl-acyl carrier protein-dependent acylation of ornithine to form lyso-ornithine lipid (LOL). The polypeptide is L-ornithine N(alpha)-acyltransferase (Agrobacterium fabrum (strain C58 / ATCC 33970) (Agrobacterium tumefaciens (strain C58))).